Reading from the N-terminus, the 892-residue chain is Gamma-tubulin small complex component GCP3 (892 aa).

This sequence belongs to the TUBGCP family. Component of the gamma-tubulin small complex (gamma-TuSC) composed of tubulin gamma chain, gamma-tubulin complex protein 2 (GCP2) and gamma-tubulin complex protein 3 (GCP3). Interacts with tubulin gamma chain.

It localises to the cytoplasm. Its subcellular location is the cytoskeleton. It is found in the flagellum axoneme. The protein resides in the flagellum basal body. Component of the gamma-tubulin small complex (gamma-TuSC) involved in microtubule (MT) nucleation for the formation of median bodies and in the biogenesis of flagella. Gamma-TuSC may be required for the correct positioning of EB1 within the trophozoites. This chain is Gamma-tubulin small complex component GCP3, found in Giardia intestinalis (strain ATCC 50803 / WB clone C6) (Giardia lamblia).